The sequence spans 382 residues: MSSPETHSDVIELTRELISRPSVTPLDEGCQDLMAKRLAAIGFTIEPMVFEDTTNLWARRGTEGPVFCFAGHTDVVPVGDLNRWHTPPFDPVVIDGYIHGRGAADMKGSLAAMVVAAERFVAEHPDHQGSIAFLITSDEEGPFINGTVRVVETLEARHEKITWALVGEPSSTHLLGDVVKNGRRGSLTGNLTVKGIQGHVAYPHLADNPIHRAAPALAELSRIEWDKGNEFFPPTSFQIANINGGTGASNVIPGELKVMFNFRYSTEVTAETLIARVLGILDAHGLDYDIDWVFNGLPFLTGEGPLLDATREAIFEVTGTHTDPQTTGGTSDGRFIAPTGAQVIELGPVNATIHKVNECVKASDLELLTGCYQRILEKLLCN.

His-72 contacts Zn(2+). Asp-74 is an active-site residue. Asp-105 contacts Zn(2+). Residue Glu-139 is the Proton acceptor of the active site. Zn(2+) contacts are provided by Glu-140, Glu-168, and His-354.

This sequence belongs to the peptidase M20A family. DapE subfamily. Homodimer. Zn(2+) is required as a cofactor. The cofactor is Co(2+).

It catalyses the reaction N-succinyl-(2S,6S)-2,6-diaminopimelate + H2O = (2S,6S)-2,6-diaminopimelate + succinate. The protein operates within amino-acid biosynthesis; L-lysine biosynthesis via DAP pathway; LL-2,6-diaminopimelate from (S)-tetrahydrodipicolinate (succinylase route): step 3/3. Its function is as follows. Catalyzes the hydrolysis of N-succinyl-L,L-diaminopimelic acid (SDAP), forming succinate and LL-2,6-diaminopimelate (DAP), an intermediate involved in the bacterial biosynthesis of lysine and meso-diaminopimelic acid, an essential component of bacterial cell walls. This Shewanella amazonensis (strain ATCC BAA-1098 / SB2B) protein is Succinyl-diaminopimelate desuccinylase.